The following is a 157-amino-acid chain: UPF0262 protein RHECIAT_CH0000657 (157 aa).

This sequence belongs to the UPF0262 family.

The protein is UPF0262 protein RHECIAT_CH0000657 of Rhizobium etli (strain CIAT 652).